The chain runs to 226 residues: MNENLFASFITPTILGISILPLIMIFPCLLFSAPNRWMPNRLVALQLWLVRMVTKQMMSMHNKQGRMWTLMLITLIMFIASTNLLGLLPYTFTPTTQLSMNMGMAVPLWLGTVLMGFRNKPKSSLAHFLPQGTPTPLIPMLIIIETISLFIQPVALAVRLTANITAGHLLIHLIGSATLALSSISLTVSTITFTILFLLTILEIAVALIQAYVFTLLVSLYLHDNT.

6 helical membrane-spanning segments follow: residues 14-34 (ILGISILPLIMIFPCLLFSAP), 68-88 (WTLMLITLIMFIASTNLLGLL), 97-117 (QLSMNMGMAVPLWLGTVLMGF), 138-158 (IPMLIIIETISLFIQPVALAV), 164-184 (ITAGHLLIHLIGSATLALSSI), and 193-213 (FTILFLLTILEIAVALIQAYV).

The protein belongs to the ATPase A chain family. As to quaternary structure, component of the ATP synthase complex composed at least of ATP5F1A/subunit alpha, ATP5F1B/subunit beta, ATP5MC1/subunit c (homooctomer), MT-ATP6/subunit a, MT-ATP8/subunit 8, ATP5ME/subunit e, ATP5MF/subunit f, ATP5MG/subunit g, ATP5MK/subunit k, ATP5MJ/subunit j, ATP5F1C/subunit gamma, ATP5F1D/subunit delta, ATP5F1E/subunit epsilon, ATP5PF/subunit F6, ATP5PB/subunit b, ATP5PD/subunit d, ATP5PO/subunit OSCP. ATP synthase complex consists of a soluble F(1) head domain (subunits alpha(3) and beta(3)) - the catalytic core - and a membrane F(0) domain - the membrane proton channel (subunits c, a, 8, e, f, g, k and j). These two domains are linked by a central stalk (subunits gamma, delta, and epsilon) rotating inside the F1 region and a stationary peripheral stalk (subunits F6, b, d, and OSCP). Interacts with DNAJC30; interaction is direct.

It is found in the mitochondrion inner membrane. It catalyses the reaction H(+)(in) = H(+)(out). Its function is as follows. Subunit a, of the mitochondrial membrane ATP synthase complex (F(1)F(0) ATP synthase or Complex V) that produces ATP from ADP in the presence of a proton gradient across the membrane which is generated by electron transport complexes of the respiratory chain. ATP synthase complex consist of a soluble F(1) head domain - the catalytic core - and a membrane F(1) domain - the membrane proton channel. These two domains are linked by a central stalk rotating inside the F(1) region and a stationary peripheral stalk. During catalysis, ATP synthesis in the catalytic domain of F(1) is coupled via a rotary mechanism of the central stalk subunits to proton translocation. With the subunit c (ATP5MC1), forms the proton-conducting channel in the F(0) domain, that contains two crucial half-channels (inlet and outlet) that facilitate proton movement from the mitochondrial intermembrane space (IMS) into the matrix. Protons are taken up via the inlet half-channel and released through the outlet half-channel, following a Grotthuss mechanism. This chain is ATP synthase F(0) complex subunit a, found in Tachyglossus aculeatus aculeatus (Southeast Australian short-beaked echidna).